Consider the following 270-residue polypeptide: Glutamate racemase (270 aa).

Substrate-binding positions include 14–15 and 46–47; these read DS and YG. Catalysis depends on C77, which acts as the Proton donor/acceptor. Residue 78–79 participates in substrate binding; that stretch reads NT. C186 (proton donor/acceptor) is an active-site residue. Substrate is bound at residue 187 to 188; sequence TH.

Belongs to the aspartate/glutamate racemases family.

The enzyme catalyses L-glutamate = D-glutamate. It functions in the pathway cell wall biogenesis; peptidoglycan biosynthesis. In terms of biological role, provides the (R)-glutamate required for cell wall biosynthesis. This is Glutamate racemase from Trichodesmium erythraeum (strain IMS101).